The chain runs to 139 residues: Holo-[acyl-carrier-protein] synthase (139 aa).

Residues D8 and E57 each coordinate Mg(2+).

This sequence belongs to the P-Pant transferase superfamily. AcpS family. Mg(2+) serves as cofactor.

It localises to the cytoplasm. It catalyses the reaction apo-[ACP] + CoA = holo-[ACP] + adenosine 3',5'-bisphosphate + H(+). Functionally, transfers the 4'-phosphopantetheine moiety from coenzyme A to a Ser of acyl-carrier-protein. The protein is Holo-[acyl-carrier-protein] synthase of Rhizobium meliloti (strain 1021) (Ensifer meliloti).